Reading from the N-terminus, the 450-residue chain is UDP-N-acetylmuramoylalanine--D-glutamate ligase (450 aa).

116–122 (GSNGKTT) serves as a coordination point for ATP.

The protein belongs to the MurCDEF family.

Its subcellular location is the cytoplasm. The catalysed reaction is UDP-N-acetyl-alpha-D-muramoyl-L-alanine + D-glutamate + ATP = UDP-N-acetyl-alpha-D-muramoyl-L-alanyl-D-glutamate + ADP + phosphate + H(+). It participates in cell wall biogenesis; peptidoglycan biosynthesis. Cell wall formation. Catalyzes the addition of glutamate to the nucleotide precursor UDP-N-acetylmuramoyl-L-alanine (UMA). The sequence is that of UDP-N-acetylmuramoylalanine--D-glutamate ligase from Dechloromonas aromatica (strain RCB).